Reading from the N-terminus, the 210-residue chain is Large ribosomal subunit protein uL4 (210 aa).

This sequence belongs to the universal ribosomal protein uL4 family. As to quaternary structure, part of the 50S ribosomal subunit.

In terms of biological role, one of the primary rRNA binding proteins, this protein initially binds near the 5'-end of the 23S rRNA. It is important during the early stages of 50S assembly. It makes multiple contacts with different domains of the 23S rRNA in the assembled 50S subunit and ribosome. Forms part of the polypeptide exit tunnel. This chain is Large ribosomal subunit protein uL4, found in Orientia tsutsugamushi (strain Boryong) (Rickettsia tsutsugamushi).